The sequence spans 155 residues: MQLNTRQARIFKLANLLGTGKPVSAADIITSLECSEPTLTRALKELRESYSAEIKYSKAGHSYHLVNPGQLDKKTLRRMNEALAQNAELKTGESTGKVVLDKDKKTAVSLSLRMRILRKIDRLAALSGSTRSEAVEKLALHSVDELIKEYSAKKS.

In terms of biological role, involved in tellurite resistance. TerW binds specifically to the potential promoter region of the terZABCDE operon and probably regulates expression of the genes. This chain is Probable tellurium resistance transcriptional regulator TerW, found in Escherichia coli.